A 258-amino-acid chain; its full sequence is Imidazole glycerol phosphate synthase subunit HisF (258 aa).

Residues D11 and D130 contribute to the active site.

Belongs to the HisA/HisF family. Heterodimer of HisH and HisF.

It is found in the cytoplasm. It catalyses the reaction 5-[(5-phospho-1-deoxy-D-ribulos-1-ylimino)methylamino]-1-(5-phospho-beta-D-ribosyl)imidazole-4-carboxamide + L-glutamine = D-erythro-1-(imidazol-4-yl)glycerol 3-phosphate + 5-amino-1-(5-phospho-beta-D-ribosyl)imidazole-4-carboxamide + L-glutamate + H(+). Its pathway is amino-acid biosynthesis; L-histidine biosynthesis; L-histidine from 5-phospho-alpha-D-ribose 1-diphosphate: step 5/9. Its function is as follows. IGPS catalyzes the conversion of PRFAR and glutamine to IGP, AICAR and glutamate. The HisF subunit catalyzes the cyclization activity that produces IGP and AICAR from PRFAR using the ammonia provided by the HisH subunit. The protein is Imidazole glycerol phosphate synthase subunit HisF of Edwardsiella ictaluri (strain 93-146).